The sequence spans 390 residues: Oxysterol-binding protein 10 (390 aa).

The protein belongs to the OSBP family.

The polypeptide is Oxysterol-binding protein 10 (osbJ) (Dictyostelium discoideum (Social amoeba)).